The chain runs to 747 residues: Histone-lysine N-methyltransferase EZH1 (747 aa).

The disordered stretch occupies residues 188-231 (DEEEEGHNDTSDGKQDDSKEDLPVTRKRKRHAIEGNKKSSKKQF). Positions 194-211 (HNDTSDGKQDDSKEDLPV) are enriched in basic and acidic residues. A Glycyl lysine isopeptide (Lys-Gly) (interchain with G-Cter in SUMO2) cross-link involves residue lysine 327. A disordered region spans residues 378-421 (SAVAETKEGDSDRDTGNDWASSSSEANSRCQTPTKQKASPAPPQ). A compositionally biased stretch (basic and acidic residues) spans 382-393 (ETKEGDSDRDTG). Positions 395–414 (DWASSSSEANSRCQTPTKQK) are enriched in polar residues. The Nuclear localization signal motif lies at 491–496 (QKKKRK). The region spanning 504 to 606 (CRKIQLKKDN…CKVVSCKNCS (103 aa)) is the CXC domain. In terms of domain architecture, SET spans 613–728 (KHLLLAPSDV…AGEELFLDYR (116 aa)).

It belongs to the class V-like SAM-binding methyltransferase superfamily. Histone-lysine methyltransferase family. EZ subfamily. In terms of assembly, component of the PRC2/EED-EZH1 complex, which includes EED, EZH1, SUZ12, RBBP4 and AEBP2. The PRC2/EED-EZH1 is less abundant than the PRC2/EED-EZH2 complex, has weak methyltransferase activity and compacts chromatin in the absence of the methyltransferase cofactor S-adenosyl-L-methionine (SAM). Interacts with EZHIP; the interaction blocks EZH1 methyltransferase activity.

Its subcellular location is the nucleus. The catalysed reaction is L-lysyl(27)-[histone H3] + 3 S-adenosyl-L-methionine = N(6),N(6),N(6)-trimethyl-L-lysyl(27)-[histone H3] + 3 S-adenosyl-L-homocysteine + 3 H(+). Its function is as follows. Polycomb group (PcG) protein. Catalytic subunit of the PRC2/EED-EZH1 complex, which methylates 'Lys-27' of histone H3, leading to transcriptional repression of the affected target gene. Able to mono-, di- and trimethylate 'Lys-27' of histone H3 to form H3K27me1, H3K27me2 and H3K27me3, respectively. Required for embryonic stem cell derivation and self-renewal, suggesting that it is involved in safeguarding embryonic stem cell identity. Compared to EZH2-containing complexes, it is less abundant in embryonic stem cells, has weak methyltransferase activity and plays a less critical role in forming H3K27me3, which is required for embryonic stem cell identity and proper differentiation. In Pongo abelii (Sumatran orangutan), this protein is Histone-lysine N-methyltransferase EZH1 (EZH1).